We begin with the raw amino-acid sequence, 248 residues long: Ankyrin repeat domain-containing protein 45 (248 aa).

Composition is skewed to acidic residues over residues 1 to 10 and 22 to 33; these read MEPEETLESE and EYEESQEAEETG. Residues 1–42 are disordered; it reads MEPEETLESESSEKSLFSSQQEYEESQEAEETGAENPLLQPT. ANK repeat units follow at residues 75-104 and 108-137; these read VGRN…NLNE and RGYT…DIEA.

The protein localises to the cytoplasm. Its subcellular location is the midbody. It is found in the midbody ring. It localises to the cleavage furrow. May play a role during cell division. The protein is Ankyrin repeat domain-containing protein 45 (Ankrd45) of Mus musculus (Mouse).